The chain runs to 161 residues: V-type proton ATPase 16 kDa proteolipid subunit c 2 (161 aa).

Over 1-15 (MSYDLETAEHAAYAP) the chain is Lumenal. A helical transmembrane segment spans residues 16-36 (FFGYMGAASAQIFTVLGAAYG). Over 37–58 (TAKSAVGICSMGVMRPELIMKS) the chain is Cytoplasmic. The chain crosses the membrane as a helical span at residues 59–79 (VIPVIMAGIIGIYGLVVAMVL). The Lumenal segment spans residues 80–98 (KGKVQAASAGYDLNKGFAH). Residues 99–119 (LAAGLTCGLCGLGAGYAIGIV) form a helical membrane-spanning segment. The Cytoplasmic segment spans residues 120 to 137 (GDAGVRGTAQQPRLFVGM). The helical transmembrane segment at 138 to 158 (ILILIFSEVLGLYGMIVALIL) threads the bilayer. Residues 159–161 (GTS) are Lumenal-facing.

The protein belongs to the V-ATPase proteolipid subunit family. V-ATPase is a heteromultimeric enzyme made up of two complexes: the ATP-hydrolytic V1 complex and the proton translocation V0 complex. The V1 complex consists of three catalytic AB heterodimers that form a heterohexamer, three peripheral stalks each consisting of EG heterodimers, one central rotor including subunits D and F, and the regulatory subunits C and H. The proton translocation complex V0 consists of the proton transport subunit a, a ring of proteolipid subunits c9c'', rotary subunit d, subunits e and f, and the accessory subunits vah-19/Ac45 and vah-20/PRR.

The protein resides in the membrane. In terms of biological role, proton-conducting pore forming subunit of the V0 complex of vacuolar(H+)-ATPase (V-ATPase), a multisubunit enzyme composed of a peripheral complex (V1) that hydrolyzes ATP and a membrane integral complex (V0) that translocates protons. V-ATPase is responsible for acidifying and maintaining the pH of intracellular compartments and in some cell types, is targeted to the plasma membrane, where it is responsible for acidifying the extracellular environment. Involved in necrotic cell death. Required along with other vacuolar ATPase components for the removal of protein aggregates which form in immature oocytes in the distal gonad. This removal occurs as the oocytes mature and move to the proximal gonad, is triggered by the introduction of sperm through mating and occurs before fertilization. The introduction of sperm triggers V-ATPase accumulation in proximal oocytes and induces lysosomal acidification which leads to engulfing of protein aggregates by lysosomes and subsequent clearance of the aggregates. Lysosomal acidification also leads to changes in mitochondrial morphology and function. Mitochondria in distal immature oocytes are fragmented, produce high levels of reactive oxygen species (ROS) and have high membrane potential, indicative of metabolic inactivity. In contrast, mitochondria in proximal mature oocytes are tubular with lower ROS levels and membrane potential, indicative of an active metabolic state required for aggregate mobilization before clearance. The chain is V-type proton ATPase 16 kDa proteolipid subunit c 2 from Caenorhabditis briggsae.